The primary structure comprises 479 residues: NAC domain-containing protein 45 (479 aa).

Residues 6-157 form the NAC domain; sequence LPPGFRFHPT…AYALCRVFKK (152 aa). A DNA-binding region spans residues 105-163; sequence IGTKKTLVYYRGRAPHGIRTGWVMHEYRLDETECEPSAYGMQDAYALCRVFKKIVIEAK.

Expressed in a few sieve element cells before enucleation and in phloem-pole pericycle cells.

The protein localises to the nucleus. In terms of biological role, transcription factor directing sieve element enucleation and cytosol degradation. Not required for formation of lytic vacuoles. Regulates, with NAC086, the transcription of NEN1, NEN2, NEN3, NEN4, RTM1, RTM2, UBP16, PLDZETA, ABCB10 and At1g26450. The sequence is that of NAC domain-containing protein 45 from Arabidopsis thaliana (Mouse-ear cress).